The sequence spans 166 residues: Small heat shock protein OV25-2 (166 aa).

The 112-residue stretch at 38–149 folds into the sHSP domain; that stretch reads LNECNIGNSL…ASRNIPIRAS (112 aa). Residues 140-166 are disordered; sequence ASRNIPIRASPKEPEANQKSAINDAKQ.

Belongs to the small heat shock protein (HSP20) family.

The polypeptide is Small heat shock protein OV25-2 (OV25-2) (Onchocerca volvulus).